Reading from the N-terminus, the 211-residue chain is MTSQRTRERLIQRLYEEGLSNAQVLEVIRRTPRHLFVDEALAHRAYEDTALPIGHNQTISQPYMVARMSELLLAAGPLDKVLEIGTGSGYQTAVLAQLVERVFSVERIKVLQDRAKERLVELNLRNVVFRWGDGWEGWPALAPYNGIIVTAVATDVPQALLDQLAPGGRLVIPVGSGEVQQLMLIIREDEGFSRHVLGAVRFVPLLNGPLA.

Ser-60 is an active-site residue.

Belongs to the methyltransferase superfamily. L-isoaspartyl/D-aspartyl protein methyltransferase family.

It is found in the cytoplasm. It catalyses the reaction [protein]-L-isoaspartate + S-adenosyl-L-methionine = [protein]-L-isoaspartate alpha-methyl ester + S-adenosyl-L-homocysteine. Its function is as follows. Catalyzes the methyl esterification of L-isoaspartyl residues in peptides and proteins that result from spontaneous decomposition of normal L-aspartyl and L-asparaginyl residues. It plays a role in the repair and/or degradation of damaged proteins. The chain is Protein-L-isoaspartate O-methyltransferase from Pseudomonas fluorescens (strain SBW25).